The primary structure comprises 194 residues: Imidazoleglycerol-phosphate dehydratase (194 aa).

Belongs to the imidazoleglycerol-phosphate dehydratase family.

The protein localises to the cytoplasm. It catalyses the reaction D-erythro-1-(imidazol-4-yl)glycerol 3-phosphate = 3-(imidazol-4-yl)-2-oxopropyl phosphate + H2O. It functions in the pathway amino-acid biosynthesis; L-histidine biosynthesis; L-histidine from 5-phospho-alpha-D-ribose 1-diphosphate: step 6/9. This Listeria monocytogenes serotype 4b (strain F2365) protein is Imidazoleglycerol-phosphate dehydratase.